The chain runs to 501 residues: ADP,ATP carrier protein 3 (501 aa).

Transmembrane regions (helical) follow at residues 23 to 43 (LKLF…FGAL), 59 to 79 (IISL…TVLY), 90 to 110 (YIFY…AYII), 146 to 166 (YALM…LMFW), 183 to 203 (PVLG…LVFF), 227 to 247 (IMLQ…MLLF), 293 to 313 (IALL…PWKA), 326 to 346 (FNFM…FMVI), 361 to 381 (LLTP…IIFI), 383 to 403 (EIGA…VGAI), 446 to 466 (FGKS…PTAT), and 470 to 490 (IIIY…WNVI).

This sequence belongs to the ADP/ATP translocase tlc family.

The protein resides in the cell membrane. In terms of biological role, provides the rickettsial cell with host ATP in exchange for rickettsial ADP. This is an obligate exchange system. This energy acquiring activity is an important component of rickettsial parasitism. In Rickettsia felis (strain ATCC VR-1525 / URRWXCal2) (Rickettsia azadi), this protein is ADP,ATP carrier protein 3 (tlcC).